The sequence spans 319 residues: Cytochrome c biogenesis protein CcsA (319 aa).

Helical transmembrane passes span 15-35, 44-64, 71-91, 96-116, 141-161, 223-243, 258-278, and 284-304; these read FSIV…NKIV, GMIL…IFAG, LYES…IPYF, LSAI…SGFF, MILA…LLVI, VISL…VWAN, WAFI…NINL, and AIVA…VNLL.

The protein belongs to the CcmF/CycK/Ccl1/NrfE/CcsA family. May interact with Ccs1.

The protein resides in the plastid. It localises to the chloroplast thylakoid membrane. Required during biogenesis of c-type cytochromes (cytochrome c6 and cytochrome f) at the step of heme attachment. The protein is Cytochrome c biogenesis protein CcsA of Fagopyrum esculentum subsp. ancestrale (Wild buckwheat).